A 269-amino-acid polypeptide reads, in one-letter code: Diaminopimelate epimerase (269 aa).

Substrate-binding residues include asparagine 13, glutamine 46, and asparagine 65. The active-site Proton donor is cysteine 74. Substrate-binding positions include 75–76 (GN), asparagine 149, asparagine 182, and 200–201 (ER). Catalysis depends on cysteine 209, which acts as the Proton acceptor. A substrate-binding site is contributed by 210–211 (GT).

Belongs to the diaminopimelate epimerase family. In terms of assembly, homodimer.

The protein localises to the cytoplasm. It carries out the reaction (2S,6S)-2,6-diaminopimelate = meso-2,6-diaminopimelate. It participates in amino-acid biosynthesis; L-lysine biosynthesis via DAP pathway; DL-2,6-diaminopimelate from LL-2,6-diaminopimelate: step 1/1. Functionally, catalyzes the stereoinversion of LL-2,6-diaminopimelate (L,L-DAP) to meso-diaminopimelate (meso-DAP), a precursor of L-lysine and an essential component of the bacterial peptidoglycan. In Zymomonas mobilis subsp. mobilis (strain ATCC 31821 / ZM4 / CP4), this protein is Diaminopimelate epimerase.